Consider the following 291-residue polypeptide: Probable 2-(5''-triphosphoribosyl)-3'-dephosphocoenzyme-A synthase (291 aa).

Belongs to the CitG/MdcB family.

It catalyses the reaction 3'-dephospho-CoA + ATP = 2'-(5''-triphospho-alpha-D-ribosyl)-3'-dephospho-CoA + adenine. In terms of biological role, involved in the formation of 2-(5''-phosphoribosyl)-3'-dephosphocoenzyme-A, the prosthetic group of the acyl-carrier protein of the malonate decarboxylase. This chain is Probable 2-(5''-triphosphoribosyl)-3'-dephosphocoenzyme-A synthase, found in Pseudomonas fluorescens (strain ATCC BAA-477 / NRRL B-23932 / Pf-5).